The sequence spans 98 residues: Small ribosomal subunit protein bS20 (98 aa).

The protein belongs to the bacterial ribosomal protein bS20 family.

Binds directly to 16S ribosomal RNA. The protein is Small ribosomal subunit protein bS20 of Synechococcus elongatus (strain ATCC 33912 / PCC 7942 / FACHB-805) (Anacystis nidulans R2).